The primary structure comprises 327 residues: Tryptophan--tRNA ligase (327 aa).

ATP contacts are provided by residues 9-11 and 17-18; these read QPS and GN. The short motif at 10-18 is the 'HIGH' region element; the sequence is PSGTLTLGN. Residue Asp132 participates in L-tryptophan binding. ATP is bound by residues 144–146, Ile183, and 192–196; these read GDD and KMSKS. The short motif at 192 to 196 is the 'KMSKS' region element; it reads KMSKS.

Belongs to the class-I aminoacyl-tRNA synthetase family. As to quaternary structure, homodimer.

It is found in the cytoplasm. The enzyme catalyses tRNA(Trp) + L-tryptophan + ATP = L-tryptophyl-tRNA(Trp) + AMP + diphosphate + H(+). In terms of biological role, catalyzes the attachment of tryptophan to tRNA(Trp). The polypeptide is Tryptophan--tRNA ligase (Oceanobacillus iheyensis (strain DSM 14371 / CIP 107618 / JCM 11309 / KCTC 3954 / HTE831)).